The primary structure comprises 46 residues: Esculentin-1A (46 aa).

Cys-40 and Cys-46 are joined by a disulfide.

Belongs to the frog skin active peptide (FSAP) family. Brevinin subfamily. Expressed by the skin glands.

It localises to the secreted. Functionally, shows antibacterial activity against representative Gram-negative and Gram-positive bacterial species, and hemolytic activity. In Pelophylax lessonae (Pool frog), this protein is Esculentin-1A.